We begin with the raw amino-acid sequence, 232 residues long: Octanoyltransferase (232 aa).

Residues 44–219 form the BPL/LPL catalytic domain; sequence EHTGDELWVV…QLARQFGLVL (176 aa). Substrate-binding positions include 83–90, 150–152, and 163–165; these read RGGQVTYH, ALG, and GLS. Residue Cys181 is the Acyl-thioester intermediate of the active site.

Belongs to the LipB family.

Its subcellular location is the cytoplasm. The enzyme catalyses octanoyl-[ACP] + L-lysyl-[protein] = N(6)-octanoyl-L-lysyl-[protein] + holo-[ACP] + H(+). The protein operates within protein modification; protein lipoylation via endogenous pathway; protein N(6)-(lipoyl)lysine from octanoyl-[acyl-carrier-protein]: step 1/2. Catalyzes the transfer of endogenously produced octanoic acid from octanoyl-acyl-carrier-protein onto the lipoyl domains of lipoate-dependent enzymes. Lipoyl-ACP can also act as a substrate although octanoyl-ACP is likely to be the physiological substrate. This is Octanoyltransferase from Xanthomonas campestris pv. campestris (strain B100).